Here is an 87-residue protein sequence, read N- to C-terminus: uncharacterized protein (87 aa).

It belongs to the SF3B5 family.

This is an uncharacterized protein from Arabidopsis thaliana (Mouse-ear cress).